The following is a 349-amino-acid chain: ALA-interacting subunit 3 (349 aa).

Low complexity predominate over residues 1-21 (MSSNTASSSAGAAGSGDSSAA). Positions 1-30 (MSSNTASSSAGAAGSGDSSAARKNSKRPKY) are disordered. Serine 2 bears the N-acetylserine mark. Residues 50–70 (VISTFLIVSVIFIPLGVISLF) traverse the membrane as a helical segment. Residues asparagine 181, asparagine 190, and asparagine 223 are each glycosylated (N-linked (GlcNAc...) asparagine). A helical membrane pass occupies residues 305 to 325 (LGIAYLTVGGICFILALAFTI).

This sequence belongs to the CDC50/LEM3 family. As to quaternary structure, interacts with ALA2 and ALA3 in a heterologous system. In terms of tissue distribution, expressed in roots, leaves, stems, flowers and siliques.

The protein localises to the golgi apparatus membrane. Its subcellular location is the prevacuolar compartment membrane. It is found in the endoplasmic reticulum membrane. Required for the lipid transport activity of the ALA/ALIS P4-ATPase complex. In Arabidopsis thaliana (Mouse-ear cress), this protein is ALA-interacting subunit 3 (ALIS3).